The sequence spans 189 residues: Crossover junction endodeoxyribonuclease RuvC (189 aa).

Active-site residues include D8, E67, and D139. 3 residues coordinate Mg(2+): D8, E67, and D139.

This sequence belongs to the RuvC family. In terms of assembly, homodimer which binds Holliday junction (HJ) DNA. The HJ becomes 2-fold symmetrical on binding to RuvC with unstacked arms; it has a different conformation from HJ DNA in complex with RuvA. In the full resolvosome a probable DNA-RuvA(4)-RuvB(12)-RuvC(2) complex forms which resolves the HJ. The cofactor is Mg(2+).

It is found in the cytoplasm. The enzyme catalyses Endonucleolytic cleavage at a junction such as a reciprocal single-stranded crossover between two homologous DNA duplexes (Holliday junction).. In terms of biological role, the RuvA-RuvB-RuvC complex processes Holliday junction (HJ) DNA during genetic recombination and DNA repair. Endonuclease that resolves HJ intermediates. Cleaves cruciform DNA by making single-stranded nicks across the HJ at symmetrical positions within the homologous arms, yielding a 5'-phosphate and a 3'-hydroxyl group; requires a central core of homology in the junction. The consensus cleavage sequence is 5'-(A/T)TT(C/G)-3'. Cleavage occurs on the 3'-side of the TT dinucleotide at the point of strand exchange. HJ branch migration catalyzed by RuvA-RuvB allows RuvC to scan DNA until it finds its consensus sequence, where it cleaves and resolves the cruciform DNA. This is Crossover junction endodeoxyribonuclease RuvC from Histophilus somni (strain 129Pt) (Haemophilus somnus).